Reading from the N-terminus, the 382-residue chain is MASLPNGAASASAASSAAGGGPAVVDKEVDFANYFCTYSYLYHQKEMLCDRVRMDAYHSAVFRNAHHFRGKVVLDVGTGSGILAIWSAQAGARKVYAVEATNMAEHARELARANDVADIVEVIQGSMEDVVLPEKVDVIISEWMGYFLLRESMFDSVICARDRWLKPDGVMYPSHARMWLAPIRSDLAENKMEDLEIAMHDWNLFVEDTESYYGVNMNVLTKAYRAEHEKYYLKSAIWNNLHPNQVIGQAAVIKEIDCLTATVDEIREVRAQVTMPIKLDMTRLAALAGWFDVHFRGSKQNPATQEVELSTAPDVNGGTHWGQQVFLLTPPLKVNEGDNVKVSFTMVRSKENHRLMDMEFTYELHESSGKQLPAITTKIYLE.

Residues 1–21 (MASLPNGAASASAASSAAGGG) are disordered. Over residues 7–17 (GAASASAASSA) the composition is skewed to low complexity. An SAM-dependent MTase PRMT-type domain is found at 28-359 (EVDFANYFCT…KENHRLMDME (332 aa)). Residues Glu142 and Glu151 contribute to the active site. The tract at residues 189–229 (ENKMEDLEIAMHDWNLFVEDTESYYGVNMNVLTKAYRAEHE) is dimerization arm.

The protein belongs to the class I-like SAM-binding methyltransferase superfamily. Protein arginine N-methyltransferase family. As to quaternary structure, ring-like homodimer.

The catalysed reaction is L-arginyl-[protein] + 2 S-adenosyl-L-methionine = N(omega),N(omega)-dimethyl-L-arginyl-[protein] + 2 S-adenosyl-L-homocysteine + 2 H(+). Methylates (mono and asymmetric dimethylation) the guanidino nitrogens of arginyl residues in some proteins. This chain is Protein arginine N-methyltransferase PRMT10 (PRMT10), found in Oryza sativa subsp. indica (Rice).